The primary structure comprises 82 residues: Small ribosomal subunit protein bS18 (82 aa).

This sequence belongs to the bacterial ribosomal protein bS18 family. As to quaternary structure, part of the 30S ribosomal subunit. Forms a tight heterodimer with protein bS6.

In terms of biological role, binds as a heterodimer with protein bS6 to the central domain of the 16S rRNA, where it helps stabilize the platform of the 30S subunit. This is Small ribosomal subunit protein bS18 from Chlamydia caviae (strain ATCC VR-813 / DSM 19441 / 03DC25 / GPIC) (Chlamydophila caviae).